The primary structure comprises 1479 residues: ABC transporter ecdL (1479 aa).

Helical transmembrane passes span L32–L52, L82–F102, and I142–M162. N-linked (GlcNAc...) asparagine glycans are attached at residues N183 and N234. 2 consecutive transmembrane segments (helical) span residues W251–V271 and S291–F311. Residues L258–Q535 form the ABC transmembrane type-1 1 domain. N345 carries an N-linked (GlcNAc...) asparagine glycan. The next 2 helical transmembrane spans lie at L365–L382 and V391–L411. N-linked (GlcNAc...) asparagine glycosylation is present at N427. 2 consecutive transmembrane segments (helical) span residues L469–F489 and P503–V523. The ABC transporter 1 domain maps to I607 to V835. N611 and N628 each carry an N-linked (GlcNAc...) asparagine glycan. G641–S648 serves as a coordination point for ATP. N793 and N797 each carry an N-linked (GlcNAc...) asparagine glycan. A run of 5 helical transmembrane segments spans residues T885–L905, L955–M975, A1028–Y1048, Y1052–L1072, and I1135–I1155. The 262-residue stretch at I932–N1193 folds into the ABC transmembrane type-1 2 domain. An N-linked (GlcNAc...) asparagine glycan is attached at N1161. Residues A1165–V1185 traverse the membrane as a helical segment. N-linked (GlcNAc...) asparagine glycosylation occurs at N1187. One can recognise an ABC transporter 2 domain in the interval I1230–S1461. Residue G1264–S1271 participates in ATP binding. The tract at residues R1460–E1479 is disordered. The span at S1461–E1479 shows a compositional bias: basic and acidic residues.

Belongs to the ABC transporter superfamily. ABCC family. Conjugate transporter (TC 3.A.1.208) subfamily.

The protein resides in the cell membrane. ABC transporter; part of the gene cluster that mediates the biosynthesis of echinocandin B, a fungal lipidated cyclic hexapeptide that acts as an antifungal agent. This chain is ABC transporter ecdL, found in Aspergillus rugulosus (Emericella rugulosa).